The sequence spans 254 residues: Dihydroorotate dehydrogenase B (NAD(+)), electron transfer subunit (254 aa).

An FAD-binding FR-type domain is found at 1-99; that stretch reads MLQTEMKVIQ…LGPLGKGFDL (99 aa). FAD contacts are provided by residues 50–53, 67–69, and 74–75; these read RPIS, LYR, and GT. [2Fe-2S] cluster-binding residues include Cys-218, Cys-223, Cys-226, and Cys-241.

Belongs to the PyrK family. As to quaternary structure, heterotetramer of 2 PyrK and 2 PyrD type B subunits. Requires [2Fe-2S] cluster as cofactor. The cofactor is FAD.

It functions in the pathway pyrimidine metabolism; UMP biosynthesis via de novo pathway; orotate from (S)-dihydroorotate (NAD(+) route): step 1/1. In terms of biological role, responsible for channeling the electrons from the oxidation of dihydroorotate from the FMN redox center in the PyrD type B subunit to the ultimate electron acceptor NAD(+). The sequence is that of Dihydroorotate dehydrogenase B (NAD(+)), electron transfer subunit from Listeria innocua serovar 6a (strain ATCC BAA-680 / CLIP 11262).